A 139-amino-acid polypeptide reads, in one-letter code: Holo-[acyl-carrier-protein] synthase (139 aa).

Residues Asp-8 and Glu-61 each coordinate Mg(2+).

It belongs to the P-Pant transferase superfamily. AcpS family. Mg(2+) serves as cofactor.

The protein resides in the cytoplasm. It catalyses the reaction apo-[ACP] + CoA = holo-[ACP] + adenosine 3',5'-bisphosphate + H(+). Transfers the 4'-phosphopantetheine moiety from coenzyme A to a Ser of acyl-carrier-protein. The polypeptide is Holo-[acyl-carrier-protein] synthase (Nitrobacter winogradskyi (strain ATCC 25391 / DSM 10237 / CIP 104748 / NCIMB 11846 / Nb-255)).